The sequence spans 122 residues: Acidic phospholipase A2 A' (122 aa).

7 disulfides stabilise this stretch: cysteine 26/cysteine 115, cysteine 28/cysteine 44, cysteine 43/cysteine 95, cysteine 49/cysteine 122, cysteine 50/cysteine 88, cysteine 57/cysteine 81, and cysteine 75/cysteine 86. Ca(2+) is bound by residues tyrosine 27, glycine 29, and glycine 31. Residue histidine 47 is part of the active site. Aspartate 48 lines the Ca(2+) pocket. Aspartate 89 is a catalytic residue.

The protein belongs to the phospholipase A2 family. Group II subfamily. D49 sub-subfamily. The cofactor is Ca(2+). Expressed by the venom gland.

Its subcellular location is the secreted. The enzyme catalyses a 1,2-diacyl-sn-glycero-3-phosphocholine + H2O = a 1-acyl-sn-glycero-3-phosphocholine + a fatty acid + H(+). Its function is as follows. PLA2 catalyzes the calcium-dependent hydrolysis of the 2-acyl groups in 3-sn-phosphoglycerides. The protein is Acidic phospholipase A2 A' of Gloydius halys (Chinese water mocassin).